A 398-amino-acid polypeptide reads, in one-letter code: 1-deoxy-D-xylulose 5-phosphate reductoisomerase (398 aa).

Residues Thr10, Gly11, Ser12, Ile13, Gly36, Lys37, Asn38, and Asn124 each contribute to the NADPH site. Lys125 serves as a coordination point for 1-deoxy-D-xylulose 5-phosphate. Glu126 provides a ligand contact to NADPH. Residue Asp150 coordinates Mn(2+). 1-deoxy-D-xylulose 5-phosphate contacts are provided by Ser151, Glu152, Ser186, and His209. Glu152 is a binding site for Mn(2+). Gly215 lines the NADPH pocket. The 1-deoxy-D-xylulose 5-phosphate site is built by Ser222, Asn227, Lys228, and Glu231. Glu231 is a binding site for Mn(2+).

It belongs to the DXR family. Homodimer. It depends on Mg(2+) as a cofactor. Mn(2+) serves as cofactor.

It catalyses the reaction 2-C-methyl-D-erythritol 4-phosphate + NADP(+) = 1-deoxy-D-xylulose 5-phosphate + NADPH + H(+). It functions in the pathway isoprenoid biosynthesis; isopentenyl diphosphate biosynthesis via DXP pathway; isopentenyl diphosphate from 1-deoxy-D-xylulose 5-phosphate: step 1/6. Its function is as follows. Catalyzes the NADPH-dependent rearrangement and reduction of 1-deoxy-D-xylulose-5-phosphate (DXP) to 2-C-methyl-D-erythritol 4-phosphate (MEP). This is 1-deoxy-D-xylulose 5-phosphate reductoisomerase from Escherichia coli O157:H7.